A 487-amino-acid polypeptide reads, in one-letter code: UDP-N-acetylmuramoyl-L-alanyl-D-glutamate--2,6-diaminopimelate ligase (487 aa).

2 residues coordinate UDP-N-acetyl-alpha-D-muramoyl-L-alanyl-D-glutamate: Leu23 and Ser25. 108-114 (GTNGKTS) lines the ATP pocket. Residues 150–151 (TT), Ser177, Gln183, and Arg185 contribute to the UDP-N-acetyl-alpha-D-muramoyl-L-alanyl-D-glutamate site. N6-carboxylysine is present on Lys217. Meso-2,6-diaminopimelate is bound by residues Arg378, 402-405 (DNPR), Gly453, and Glu457. Positions 402-405 (DNPR) match the Meso-diaminopimelate recognition motif motif.

The protein belongs to the MurCDEF family. MurE subfamily. Requires Mg(2+) as cofactor. Post-translationally, carboxylation is probably crucial for Mg(2+) binding and, consequently, for the gamma-phosphate positioning of ATP.

Its subcellular location is the cytoplasm. The enzyme catalyses UDP-N-acetyl-alpha-D-muramoyl-L-alanyl-D-glutamate + meso-2,6-diaminopimelate + ATP = UDP-N-acetyl-alpha-D-muramoyl-L-alanyl-gamma-D-glutamyl-meso-2,6-diaminopimelate + ADP + phosphate + H(+). The protein operates within cell wall biogenesis; peptidoglycan biosynthesis. Catalyzes the addition of meso-diaminopimelic acid to the nucleotide precursor UDP-N-acetylmuramoyl-L-alanyl-D-glutamate (UMAG) in the biosynthesis of bacterial cell-wall peptidoglycan. The sequence is that of UDP-N-acetylmuramoyl-L-alanyl-D-glutamate--2,6-diaminopimelate ligase from Ectopseudomonas mendocina (strain ymp) (Pseudomonas mendocina).